Reading from the N-terminus, the 142-residue chain is Sorting nexin-3 (142 aa).

Positions 21–138 (NFLEIEVRNP…AAFVQDPNWD (118 aa)) constitute a PX domain. A 1,2-diacyl-sn-glycero-3-phospho-(1D-myo-inositol-3-phosphate)-binding residues include Arg64, Ser66, Lys90, Arg95, and Arg104.

This sequence belongs to the sorting nexin family.

The protein localises to the cytoplasm. Its subcellular location is the golgi apparatus membrane. It is found in the prevacuolar compartment membrane. Its function is as follows. Required for retention of late Golgi membrane proteins. Component of the retrieval machinery that functions by direct interaction with the cytosolic tails of certain TGN membrane proteins during the sorting/budding process at the prevacuolar compartment. Binds phosphatidylinositol 3-phosphate (PtdIns(P3)). The protein is Sorting nexin-3 (snx-3) of Neurospora crassa (strain ATCC 24698 / 74-OR23-1A / CBS 708.71 / DSM 1257 / FGSC 987).